A 234-amino-acid chain; its full sequence is Cytochrome b (234 aa).

Transmembrane regions (helical) follow at residues 33 to 53 (FGSL…FLAM), 77 to 98 (WLIR…YMHV), 113 to 133 (WNIG…GYVL), and 178 to 198 (FFAF…IHLL). Residues H83 and H97 each coordinate heme b. Heme b is bound by residues H182 and H196. H201 serves as a coordination point for a ubiquinone. Residues 226–234 (IKDLLGFLV) form a helical membrane-spanning segment.

The protein belongs to the cytochrome b family. As to quaternary structure, the cytochrome bc1 complex contains 11 subunits: 3 respiratory subunits (MT-CYB, CYC1 and UQCRFS1), 2 core proteins (UQCRC1 and UQCRC2) and 6 low-molecular weight proteins (UQCRH/QCR6, UQCRB/QCR7, UQCRQ/QCR8, UQCR10/QCR9, UQCR11/QCR10 and a cleavage product of UQCRFS1). This cytochrome bc1 complex then forms a dimer. Heme b is required as a cofactor.

It is found in the mitochondrion inner membrane. Functionally, component of the ubiquinol-cytochrome c reductase complex (complex III or cytochrome b-c1 complex) that is part of the mitochondrial respiratory chain. The b-c1 complex mediates electron transfer from ubiquinol to cytochrome c. Contributes to the generation of a proton gradient across the mitochondrial membrane that is then used for ATP synthesis. The chain is Cytochrome b (MT-CYB) from Lepus arcticus (Arctic hare).